Reading from the N-terminus, the 807-residue chain is Glycerol-3-phosphate acyltransferase (807 aa).

The short motif at 308-313 (CHRSHM) is the HXXXXD motif element.

Belongs to the GPAT/DAPAT family.

Its subcellular location is the cell inner membrane. The catalysed reaction is sn-glycerol 3-phosphate + an acyl-CoA = a 1-acyl-sn-glycero-3-phosphate + CoA. Its pathway is phospholipid metabolism; CDP-diacylglycerol biosynthesis; CDP-diacylglycerol from sn-glycerol 3-phosphate: step 1/3. The protein is Glycerol-3-phosphate acyltransferase of Shewanella woodyi (strain ATCC 51908 / MS32).